Here is a 752-residue protein sequence, read N- to C-terminus: Palmitoyltransferase AKR1 (752 aa).

Disordered stretches follow at residues 1–21 (MTAE…KSDY) and 49–68 (ASSE…LGSV). The Cytoplasmic segment spans residues 1–318 (MTAEEVDKES…FPLPQYFSAS (318 aa)). Composition is skewed to basic and acidic residues over residues 9 to 21 (ESDP…KSDY) and 51 to 68 (SELK…LGSV). 6 ANK repeats span residues 72-102 (PILE…DLSN), 108-137 (ERVS…EVNF), 142-171 (LDAT…DPNI), 175-208 (QGYN…DVDQ), 212-241 (HQRT…DVKN), and 245-274 (AGFT…DFFQ). Residues 319–339 (TGKMLTFFLPWVLIPLVFYIF) form a helical membrane-spanning segment. Residues 340–341 (SK) are Lumenal-facing. The chain crosses the membrane as a helical span at residues 342–362 (ITFFIALLINTIVLVISGLVL). Residues 363 to 380 (SRLVVPSYLLSKRHPILN) are Cytoplasmic-facing. A helical transmembrane segment spans residues 381–401 (SPLLAGILSGTIAIAFFIWFT). Residues 402-412 (KISILTFTEKP) are Lumenal-facing. A helical membrane pass occupies residues 413-433 (VGNIIMLGFFIGLITLFIGLM). The Cytoplasmic portion of the chain corresponds to 434–509 (KSDPGYIPGT…YNQIGLLNHK (76 aa)). The DHHC domain occupies 466-516 (HFCVHTWIRIPLRSKYDRDSACLISAFDHFCPWVYNQIGLLNHKLFYMFVV). The active-site S-palmitoyl cysteine intermediate is Cys-496. Residues 510–530 (LFYMFVVLLEISVWWFLPLMM) traverse the membrane as a helical segment. Topologically, residues 531–567 (EYFDELEDYLENRKGKHFGDCHFLGDEDLCFGLHHDT) are lumenal. The chain crosses the membrane as a helical span at residues 568 to 588 (FNFLLLCWVIFQAFWVLCLIA). Residues 589-752 (VQTVQMLKGV…TLPNATEELV (164 aa)) lie on the Cytoplasmic side of the membrane.

The protein belongs to the DHHC palmitoyltransferase family. AKR/ZDHHC17 subfamily.

Its subcellular location is the early endosome membrane. The protein localises to the golgi apparatus membrane. It carries out the reaction L-cysteinyl-[protein] + hexadecanoyl-CoA = S-hexadecanoyl-L-cysteinyl-[protein] + CoA. Functionally, palmitoyltransferase specific for casein kinase 1. This chain is Palmitoyltransferase AKR1 (AKR1), found in Kluyveromyces lactis (strain ATCC 8585 / CBS 2359 / DSM 70799 / NBRC 1267 / NRRL Y-1140 / WM37) (Yeast).